The sequence spans 839 residues: Periplasmic nitrate reductase (839 aa).

The tat-type signal signal peptide spans 1–34; the sequence is MTLTRRDFIKANAAAAAATAAAVNLPLVPSMAQA. In terms of domain architecture, 4Fe-4S Mo/W bis-MGD-type spans 46–102; the sequence is IKWDKAACRFCGTGCSVLVGTKGGRVVATQGDPDAPVNRGLNCIKGYFLSKIMYGED. The [4Fe-4S] cluster site is built by Cys53, Cys56, Cys60, and Cys88. Mo-bis(molybdopterin guanine dinucleotide) contacts are provided by residues Lys90, Gln157, Asn182, Cys186, 219 to 226, 250 to 254, 269 to 271, Met379, Gln383, Asn489, 515 to 516, Lys538, Asp565, and 729 to 738; these read WGSNMAEM, STYEH, QTD, SD, and TGRVLEHWHT. Phe805 is a substrate binding site. The Mo-bis(molybdopterin guanine dinucleotide) site is built by Asn813 and Lys830.

Belongs to the prokaryotic molybdopterin-containing oxidoreductase family. NasA/NapA/NarB subfamily. Component of the periplasmic nitrate reductase NapAB complex composed of NapA and NapB. It depends on [4Fe-4S] cluster as a cofactor. Mo-bis(molybdopterin guanine dinucleotide) serves as cofactor. In terms of processing, predicted to be exported by the Tat system. The position of the signal peptide cleavage has not been experimentally proven.

The protein localises to the periplasm. It catalyses the reaction 2 Fe(II)-[cytochrome] + nitrate + 2 H(+) = 2 Fe(III)-[cytochrome] + nitrite + H2O. Its function is as follows. Catalytic subunit of the periplasmic nitrate reductase complex NapAB. Receives electrons from NapB and catalyzes the reduction of nitrate to nitrite. The polypeptide is Periplasmic nitrate reductase (Laribacter hongkongensis (strain HLHK9)).